The sequence spans 291 residues: Basic helix-loop-helix protein 80 (291 aa).

The tract at residues 65 to 120 (SAVLDTSPSVDRKRKAAEDSAHSKDSCKDGKSRRGKKASKEVEEKSTTEDEPPKGY) is disordered. Positions 80-117 (AAEDSAHSKDSCKDGKSRRGKKASKEVEEKSTTEDEPP) are enriched in basic and acidic residues. Residues 125-132 (ARRGQATD) carry the Nuclear localization signal motif. The segment at 129–142 (QATDSHSLAERVRR) is basic motif; degenerate. Residues 129 to 179 (QATDSHSLAERVRRERISERMRMLQALVPGCDKVTGKALILDEIINYVQSL) form the bHLH domain. The helix-loop-helix motif stretch occupies residues 143-179 (ERISERMRMLQALVPGCDKVTGKALILDEIINYVQSL).

It belongs to the bHLH protein family. In terms of assembly, homodimer. Interacts with IBH1, BC1 and LO9-177.

The protein localises to the nucleus. Together with BCL2, positive regulator of cell elongation at least partially through increased gibberellic acid (GA) biosynthesis. This is Basic helix-loop-helix protein 80 from Oryza sativa subsp. indica (Rice).